A 391-amino-acid chain; its full sequence is Formate-dependent phosphoribosylglycinamide formyltransferase (391 aa).

Residues 20–21 (EL) and glutamate 80 each bind N(1)-(5-phospho-beta-D-ribosyl)glycinamide. Residues arginine 112, lysine 153, 158–163 (SSGKGQ), 193–196 (EGFV), and glutamate 201 each bind ATP. Residues 117–306 (RLAAEELGLP…EFALHVRAFT (190 aa)) form the ATP-grasp domain. The Mg(2+) site is built by glutamate 265 and glutamate 277. N(1)-(5-phospho-beta-D-ribosyl)glycinamide-binding positions include aspartate 284, lysine 354, and 361–362 (RR).

It belongs to the PurK/PurT family. Homodimer.

The catalysed reaction is N(1)-(5-phospho-beta-D-ribosyl)glycinamide + formate + ATP = N(2)-formyl-N(1)-(5-phospho-beta-D-ribosyl)glycinamide + ADP + phosphate + H(+). Its pathway is purine metabolism; IMP biosynthesis via de novo pathway; N(2)-formyl-N(1)-(5-phospho-D-ribosyl)glycinamide from N(1)-(5-phospho-D-ribosyl)glycinamide (formate route): step 1/1. In terms of biological role, involved in the de novo purine biosynthesis. Catalyzes the transfer of formate to 5-phospho-ribosyl-glycinamide (GAR), producing 5-phospho-ribosyl-N-formylglycinamide (FGAR). Formate is provided by PurU via hydrolysis of 10-formyl-tetrahydrofolate. The protein is Formate-dependent phosphoribosylglycinamide formyltransferase of Vibrio cholerae serotype O1 (strain ATCC 39315 / El Tor Inaba N16961).